A 315-amino-acid chain; its full sequence is FGFR1 oncogene partner 2 homolog (315 aa).

2 coiled-coil regions span residues Glu-32 to Glu-99 and Val-156 to Gln-183. Disordered stretches follow at residues Lys-201–Ser-222 and Pro-238–Thr-315. Residues Gly-246–Leu-269 are compositionally biased toward polar residues.

It belongs to the SIKE family.

The chain is FGFR1 oncogene partner 2 homolog from Drosophila melanogaster (Fruit fly).